The following is a 162-amino-acid chain: UPF0114 protein Shewmr4_0646 (162 aa).

A run of 4 helical transmembrane segments spans residues 15 to 35 (IMAP…IKFF), 53 to 73 (LVLV…IVMV), 108 to 128 (KVAA…FMDV), and 136 to 156 (IMWY…MGYL).

This sequence belongs to the UPF0114 family.

Its subcellular location is the cell membrane. In Shewanella sp. (strain MR-4), this protein is UPF0114 protein Shewmr4_0646.